Here is a 286-residue protein sequence, read N- to C-terminus: Thiazole synthase (286 aa).

K122 serves as the catalytic Schiff-base intermediate with DXP. 1-deoxy-D-xylulose 5-phosphate contacts are provided by residues G183, 209–210 (AG), and 231–232 (NT).

The protein belongs to the ThiG family. As to quaternary structure, homotetramer. Forms heterodimers with either ThiH or ThiS.

Its subcellular location is the cytoplasm. It carries out the reaction [ThiS sulfur-carrier protein]-C-terminal-Gly-aminoethanethioate + 2-iminoacetate + 1-deoxy-D-xylulose 5-phosphate = [ThiS sulfur-carrier protein]-C-terminal Gly-Gly + 2-[(2R,5Z)-2-carboxy-4-methylthiazol-5(2H)-ylidene]ethyl phosphate + 2 H2O + H(+). Its pathway is cofactor biosynthesis; thiamine diphosphate biosynthesis. Its function is as follows. Catalyzes the rearrangement of 1-deoxy-D-xylulose 5-phosphate (DXP) to produce the thiazole phosphate moiety of thiamine. Sulfur is provided by the thiocarboxylate moiety of the carrier protein ThiS. In vitro, sulfur can be provided by H(2)S. This Synechococcus elongatus (strain ATCC 33912 / PCC 7942 / FACHB-805) (Anacystis nidulans R2) protein is Thiazole synthase.